The sequence spans 218 residues: Cytochrome b6 (218 aa).

A helical transmembrane segment spans residues 35–55 (IFYCLGGITLVCFLIQFATGF). Cys-38 is a binding site for heme c. Residues His-89 and His-103 each contribute to the heme b site. The next 3 membrane-spanning stretches (helical) occupy residues 93 to 113 (ASMMVLMLILHVFRVYLTGGF), 119 to 139 (LTWVTGVTMAVITVSFGVTGY), and 189 to 209 (LHTFVMPWLLAVFMLMHFLMI). Positions 190 and 205 each coordinate heme b.

This sequence belongs to the cytochrome b family. PetB subfamily. In terms of assembly, the 4 large subunits of the cytochrome b6-f complex are cytochrome b6, subunit IV (17 kDa polypeptide, PetD), cytochrome f and the Rieske protein, while the 4 small subunits are PetG, PetL, PetM and PetN. The complex functions as a dimer. Heme b is required as a cofactor. Heme c serves as cofactor.

It localises to the cellular thylakoid membrane. In terms of biological role, component of the cytochrome b6-f complex, which mediates electron transfer between photosystem II (PSII) and photosystem I (PSI), cyclic electron flow around PSI, and state transitions. This chain is Cytochrome b6, found in Synechococcus sp. (strain CC9311).